The sequence spans 60 residues: Large ribosomal subunit protein uL30 (60 aa).

Belongs to the universal ribosomal protein uL30 family. As to quaternary structure, part of the 50S ribosomal subunit.

The protein is Large ribosomal subunit protein uL30 of Desulfitobacterium hafniense (strain DSM 10664 / DCB-2).